The chain runs to 692 residues: Elongation factor G (692 aa).

Residues 8–282 (EKTRNIGIMA…AVLDYLPAPT (275 aa)) form the tr-type G domain. Residues 17-24 (AHIDAGKT), 81-85 (DTPGH), and 135-138 (NKMD) contribute to the GTP site.

It belongs to the TRAFAC class translation factor GTPase superfamily. Classic translation factor GTPase family. EF-G/EF-2 subfamily.

Its subcellular location is the cytoplasm. Functionally, catalyzes the GTP-dependent ribosomal translocation step during translation elongation. During this step, the ribosome changes from the pre-translocational (PRE) to the post-translocational (POST) state as the newly formed A-site-bound peptidyl-tRNA and P-site-bound deacylated tRNA move to the P and E sites, respectively. Catalyzes the coordinated movement of the two tRNA molecules, the mRNA and conformational changes in the ribosome. This Bacillus licheniformis (strain ATCC 14580 / DSM 13 / JCM 2505 / CCUG 7422 / NBRC 12200 / NCIMB 9375 / NCTC 10341 / NRRL NRS-1264 / Gibson 46) protein is Elongation factor G.